Here is a 356-residue protein sequence, read N- to C-terminus: Activating signal cointegrator 1 complex subunit 1 (356 aa).

The required for interaction with ASCC3 stretch occupies residues 1–52 (MDVLRPQIVTFDGRNYRKNPIQEKQYQHEEDEDFYPDSMEYSDEPCGAYEVA). The KH domain occupies 57–119 (GFRATVSAPS…NGVVSARTRI (63 aa)).

As to quaternary structure, identified in the ASCC complex that contains ASCC1, ASCC2 and ASCC3. Interacts directly with ASCC3. The ASCC complex interacts with ALKBH3. Part of the ASC-1 complex, that contains TRIP4, ASCC1, ASCC2 and ASCC3. Interacts with CSRP1. Interacts with ZCCHC4. Expressed in the spinal cord, brain, paraspinal ganglia, thyroid, and submandibular glands.

Its subcellular location is the nucleus. The protein localises to the nucleus speckle. Functionally, plays a role in DNA damage repair as component of the ASCC complex. Part of the ASC-1 complex that enhances NF-kappa-B, SRF and AP1 transactivation. In cells responding to gastrin-activated paracrine signals, it is involved in the induction of SERPINB2 expression by gastrin. May also play a role in the development of neuromuscular junction. This Mus musculus (Mouse) protein is Activating signal cointegrator 1 complex subunit 1 (Ascc1).